The primary structure comprises 423 residues: Serine--tRNA ligase (423 aa).

229-231 (TAE) is a binding site for L-serine. 260–262 (RRE) contacts ATP. An L-serine-binding site is contributed by E283. 347–350 (EISS) is a binding site for ATP. S383 provides a ligand contact to L-serine.

Belongs to the class-II aminoacyl-tRNA synthetase family. Type-1 seryl-tRNA synthetase subfamily. In terms of assembly, homodimer. The tRNA molecule binds across the dimer.

Its subcellular location is the cytoplasm. The enzyme catalyses tRNA(Ser) + L-serine + ATP = L-seryl-tRNA(Ser) + AMP + diphosphate + H(+). It carries out the reaction tRNA(Sec) + L-serine + ATP = L-seryl-tRNA(Sec) + AMP + diphosphate + H(+). Its pathway is aminoacyl-tRNA biosynthesis; selenocysteinyl-tRNA(Sec) biosynthesis; L-seryl-tRNA(Sec) from L-serine and tRNA(Sec): step 1/1. Catalyzes the attachment of serine to tRNA(Ser). Is also able to aminoacylate tRNA(Sec) with serine, to form the misacylated tRNA L-seryl-tRNA(Sec), which will be further converted into selenocysteinyl-tRNA(Sec). This chain is Serine--tRNA ligase, found in Trichlorobacter lovleyi (strain ATCC BAA-1151 / DSM 17278 / SZ) (Geobacter lovleyi).